The chain runs to 837 residues: Granulocyte colony-stimulating factor receptor (837 aa).

Residues M1–S25 form the signal peptide. Intrachain disulfides connect C26-C52 and C46-C102. The region spanning C26–L118 is the Ig-like C2-type domain. Topologically, residues C26 to D626 are extracellular. Residues N51, N94, and N129 are each glycosylated (N-linked (GlcNAc...) asparagine). 5 consecutive Fibronectin type-III domains span residues S126–P231, L236–T331, A334–P433, A434–A529, and P530–P624. Cystine bridges form between C132/C143, C168/C219, C178/C187, C249/C296, and C267/C310. N186 and N279 each carry an N-linked (GlcNAc...) asparagine glycan. The WSXWS motif motif lies at W319 to S323. N392, N408, N474, N487, N582, and N613 each carry an N-linked (GlcNAc...) asparagine glycan. The helical transmembrane segment at L627–C650 threads the bilayer. At K651–F837 the chain is on the cytoplasmic side. The Box 1 motif signature appears at F658–A666.

It belongs to the type I cytokine receptor family. Type 2 subfamily. Homodimer. The dimeric receptor binds two CSF3 molecules. Interacts with CEACAM1; down-regulates the CSF3R-STAT3 pathway through recruitment of PTPN6 that dephosphorylates CSF3R. Post-translationally, N-glycosylated. Found in bone marrow.

The protein localises to the membrane. In terms of biological role, receptor for granulocyte colony-stimulating factor (CSF3). In addition it may function in some adhesion or recognition events at the cell surface. This Mus musculus (Mouse) protein is Granulocyte colony-stimulating factor receptor (Csf3r).